The sequence spans 912 residues: MFKSLPEEEAFRALTLTLQLVASLHDIVAYTFSFAKLGNCPACFDLPLSPNPLMRDWGGAEGIGNELQELQKMIDSLQRPQDPSQVAQALLLRREVTLLQFDAAMRHLLRTFLAAGNAPAYQSVAESACYGLPPLSNALGKSIFSSQLSLPQPLDPWSPQAFALFPWRAFLEDGGPFPVISSVPDTLEYDMQMCLCGLSDCDRRVAHGELVGVQMLMEDVLLGSCHVIRKASTEWQAALDNAQPDWSKLPGLYPNQLESHPKASALLEGQCDVVMSLSLLKSFLILWKRLEVLKEHWGRFKLRGQDINSALLHRQFSELYEAEILYPSMKALARQMGKEDEFEELMLRSQSILPPKGASEIEIKTQQLQKLLESLEIHMIQEVLRKVNREMTLFLSEKSKEESTLPTDRWKHQVMKENFSVMRPQIVERFVQRLMEDSQDDGPKITFRREHLEACILSLGCDVMARERSNFETYSMCYEHILQHTRQKLSQKEQEVDLLRRSQVPSEDCAGQVAELSHDMIMEITALRAQLTDLEEENLNLKIQIRKEVQEEYRELVQALFLTCLRIKEKLDENQFNLIQKVCELIGEVRAEGIANVKQLKKTWGSARPDEETKENTAKEQLCALEQDHSSTLAALLCKARSLGRWRLAVQQAHLRGQLSRAEMESILSKKECLRIKLMAEQEAALLHQQLLAARQALTKAQTDNRKLWRQNDTQAQLLRELEHRVTQDSVTRQQLDIIKTSGMEKLLKDVEQKEQKLQLLTEEAERASKRGQLQQKKMDRDLKQMRNRLAQERSVKLDAFQRVQELQSQLYDIQWPSVQMGSPVGLRSQTHCSLSSASTLSRHPHHHFSKTHFVGSKMTRRIQRPKTVPVKHNRRIEDGSLPSVKENVQLTTFQAQTAPSGISFRPESFSS.

2 coiled-coil regions span residues methionine 1 to alanine 35 and valine 220 to serine 276.

The chain is Coiled-coil domain-containing protein 162 from Mus musculus (Mouse).